A 184-amino-acid chain; its full sequence is TATA-box-binding protein (184 aa).

2 repeat units span residues Ile-9–Leu-85 and Val-100–Leu-178.

Belongs to the TBP family.

General factor that plays a role in the activation of archaeal genes transcribed by RNA polymerase. Binds specifically to the TATA box promoter element which lies close to the position of transcription initiation. The polypeptide is TATA-box-binding protein (Picrophilus torridus (strain ATCC 700027 / DSM 9790 / JCM 10055 / NBRC 100828 / KAW 2/3)).